The following is a 614-amino-acid chain: Cathepsin F (614 aa).

An N-terminal signal peptide occupies residues 1–20; the sequence is MRLFAAATVALVLLLGQAAG. A propeptide spans 21 to 393 (activation peptide); it reads EELAEERAGQ…AAVVPAYHGE (373 aa). Positions 25 to 50 are disordered; sequence EERAGQAQGDAESTESSETTTDQAVS. Positions 29–45 are enriched in low complexity; it reads GQAQGDAESTESSETTT. The N-linked (GlcNAc...) asparagine glycan is linked to Asn151. 2 disulfides stabilise this stretch: Cys415–Cys456 and Cys449–Cys489. The active site involves Cys418. Residues Asn492 and Asn510 are each glycosylated (N-linked (GlcNAc...) asparagine). Cys548 and Cys602 form a disulfide bridge. Catalysis depends on residues His555 and Asn581.

The protein belongs to the peptidase C1 family.

It carries out the reaction The recombinant enzyme cleaves synthetic substrates with Phe and Leu (better than Val) in P2, with high specificity constant (kcat/Km) comparable to that of cathepsin L.. Its function is as follows. May have a role in autophagic cell death. This Drosophila melanogaster (Fruit fly) protein is Cathepsin F.